The following is a 330-amino-acid chain: Tetraacyldisaccharide 4'-kinase (330 aa).

ATP is bound at residue 58 to 65; that stretch reads TVGGSGKT.

The protein belongs to the LpxK family.

The catalysed reaction is a lipid A disaccharide + ATP = a lipid IVA + ADP + H(+). It functions in the pathway glycolipid biosynthesis; lipid IV(A) biosynthesis; lipid IV(A) from (3R)-3-hydroxytetradecanoyl-[acyl-carrier-protein] and UDP-N-acetyl-alpha-D-glucosamine: step 6/6. Transfers the gamma-phosphate of ATP to the 4'-position of a tetraacyldisaccharide 1-phosphate intermediate (termed DS-1-P) to form tetraacyldisaccharide 1,4'-bis-phosphate (lipid IVA). This Shewanella pealeana (strain ATCC 700345 / ANG-SQ1) protein is Tetraacyldisaccharide 4'-kinase.